Reading from the N-terminus, the 174-residue chain is Co-chaperone protein HscB homolog (174 aa).

Residues 2-74 enclose the J domain; the sequence is NYFNLFNFTP…LRRAEHLLSL (73 aa).

The protein belongs to the HscB family. Interacts with HscA and stimulates its ATPase activity.

Its function is as follows. Co-chaperone involved in the maturation of iron-sulfur cluster-containing proteins. Seems to help targeting proteins to be folded toward HscA. This chain is Co-chaperone protein HscB homolog, found in Shewanella denitrificans (strain OS217 / ATCC BAA-1090 / DSM 15013).